Here is a 521-residue protein sequence, read N- to C-terminus: tRNA (adenine(58)-N(1))-methyltransferase non-catalytic subunit trm6 (521 aa).

3 disordered regions span residues 1–24 (METE…NNNN), 305–336 (IYDK…AKTI), and 452–521 (QKST…KIDE). Residues 12–24 (KSTTSNTNDNNNN) are compositionally biased toward low complexity. Positions 308 to 334 (KQVKEKEKEKEKDENVKDEKESGEEAK) are enriched in basic and acidic residues. 2 stretches are compositionally biased toward low complexity: residues 452–476 (QKST…TKTT) and 487–502 (DATT…AATT). Residues 510–521 (SESALKKRKIDE) show a composition bias toward basic and acidic residues.

Belongs to the TRM6/GCD10 family. In terms of assembly, heterotetramer; composed of two copies of trmt6 and two copies of trmt61a.

It localises to the nucleus. In terms of biological role, substrate-binding subunit of tRNA (adenine-N(1)-)-methyltransferase, which catalyzes the formation of N(1)-methyladenine at position 58 (m1A58) in initiator methionyl-tRNA. The polypeptide is tRNA (adenine(58)-N(1))-methyltransferase non-catalytic subunit trm6 (trmt6) (Dictyostelium discoideum (Social amoeba)).